The following is a 1234-amino-acid chain: MLIRWKSKDKSASSNQSVGGSSSSSSKKKRKGREGEEDWQNEAKSGRLPSNEQGGDERRRAMRRDDPRRHTLGGDMLVYGSQHPHAHQMAPQQQRAMDLEMSTRAQKNKKNQPMRGYAPVNQGPLFDDDPGIMSEVETASTGFRRGGKQRSSLPVVRTPSKTLERPLGLVFLQYRSETKRALLPNEITSIDTVRALFVRSFPRQLTMSYLEGPNVKIYIHDASKDMFYELEDVRSHLREIRDRSVLRLFESTEVAAPPQILPGGPGIPQPLPQAQANWDQDQSYFSEPEFDSDYKHQHIHKSKIGKQPAPYYVGSSQTLPRGMYSSERNKVSMDGYTSSPERSSRGNYEEPYYSQYGTRGAVVAPIIDEEQSDGTMTEDQYALYGIKVGPGPNRLTHRGNQIYDPTRPEDLHRIRVEHMERQLANLTGLVQKALVNQNPQIAPLAVPTLDPNYLVVPSQMQANGSGDELYIREKAPKLGKNSCQKSVSFEKSVSFSDDIQGIPKSHNPLHAAETKPTKPAIKSSTLPRTSSQERDRLKPPPPPKPIVLAQTAHPNYRADIALAPEVYNHLRGLQKKAKDLRMEVRTLRRLSQAQAVAVREDIKGTFMRIRATLLASSGSFWDHQGDQDATRISREEELYKQEVIRLEKDLSDLEGSVENLRGEVINRRTRVNMTAVEDMALVLSRASKTVAELKLKFPSLSNGLRCILSNEMEKVVREEKFLKEEPDRLESALRRCKKLTGTLVTLKRLASVQEQRLPPNEPTISEETPRSADISAPDKPIPTPRMGSFALSGGLAPENALDALLDELKTFSKPIAQQQQQQQQQQQQQQQQHQHQQLYEIRPEDSASDESAQAAVQSTVTTQISQARLYTEASVNVQQATTGSMVIAVASGTVSAQAQAQRGVLTHQQSQSQAQLMVHTNMGSLRRLHSYPSESDGELPGPPPTGPRASETSSSTSLANGGSSSKPPVPERNAELITKVGHKRIPPPPPPRTSSRSPLASPTSPNVPPNQAAAATVNLIPNSNSNASANANANANSNATGNKGIVGETTSVVSGDTSSGDNSSGNESGNDHVQRQVALEMRHQELLKKQKMLQEQYQRLQQMSKLPSVDVASSSSSSAQDIASGSNTLRKLGSETNIQQKIAALSLACETSGAAAAAAAAAAAAATNGGVVASDATSGAIGGGGGAGAAGAAGASAAAAHSNSNSNSNLNLNLNSQHQTATTTTKQLYETEIL.

The span at 1–11 (MLIRWKSKDKS) shows a compositional bias: basic and acidic residues. Disordered stretches follow at residues 1-88 (MLIR…HAHQ), 107-129 (KNKK…FDDD), and 330-350 (KVSM…NYEE). The span at 12 to 25 (ASSNQSVGGSSSSS) shows a compositional bias: low complexity. Residues 55–69 (GDERRRAMRRDDPRR) show a composition bias toward basic and acidic residues. A coiled-coil region spans residues 412–436 (HRIRVEHMERQLANLTGLVQKALVN). The segment at 498–548 (DIQGIPKSHNPLHAAETKPTKPAIKSSTLPRTSSQERDRLKPPPPPKPIVL) is disordered. Coiled-coil stretches lie at residues 565-594 (EVYN…SQAQ) and 630-666 (TRIS…EVIN). 4 disordered regions span residues 754 to 793 (EQRL…ALSG), 815 to 852 (IAQQ…DESA), 928 to 1011 (LHSY…PPNQ), and 1028 to 1070 (SANA…ESGN). Composition is skewed to low complexity over residues 817–837 (QQQQ…QHQQ), 952–965 (TSSS…GSSS), 993–1004 (TSSRSPLASPTS), 1028–1039 (SANANANANSNA), and 1046–1068 (VGET…GNES). Residues 1077–1105 (VALEMRHQELLKKQKMLQEQYQRLQQMSK) are a coiled coil.

The protein is Coiled-coil domain-containing protein CG32809 of Drosophila melanogaster (Fruit fly).